A 783-amino-acid chain; its full sequence is BMP/retinoic acid-inducible neural-specific protein 2 (783 aa).

The N-terminal stretch at 1 to 33 (MRWPCSSWFRGLWPEAAPWAVLLALGVPGWVLA) is a signal peptide. The 197-residue stretch at 85-281 (RYRIYREFAR…FVAAALSYIT (197 aa)) folds into the MACPF domain. N-linked (GlcNAc...) asparagine glycosylation is found at N185, N354, N473, N579, N626, and N658.

The protein belongs to the BRINP family. Weakly expressed in embryonic stem (ES) cells. Strongly expressed in ES-derived neural stem cells (NSCs).

Its subcellular location is the secreted. Functionally, inhibits neuronal cell proliferation by negative regulation of the cell cycle transition. The polypeptide is BMP/retinoic acid-inducible neural-specific protein 2 (Brinp2) (Mus musculus (Mouse)).